The following is a 221-amino-acid chain: MTAWLDFPLALSPLVVVSMKGGSFGQGSEANGSPQLTGLSECGADRIFLQGQAGIPGIPGVPGTNGLPGAKGDLGPQGPPGERGSTGIPGKAGPKGDKGDQGEACSLASCQQQEAGAKDCKELLDRGETLTGWYMIYPTTGRGMRAYCDMETDGGGWLVFQRRLDGSVDFYRDWEAYKKGFGRQVSEFWLGNDKIHLLTSSGIQQLRIDVEDFNNSKTFAK.

An N-terminal signal peptide occupies residues 1 to 25; sequence MTAWLDFPLALSPLVVVSMKGGSFG. The Collagen-like domain occupies 50–104; that stretch reads QGQAGIPGIPGVPGTNGLPGAKGDLGPQGPPGERGSTGIPGKAGPKGDKGDQGEA. Residues 54–104 are disordered; it reads GIPGIPGVPGTNGLPGAKGDLGPQGPPGERGSTGIPGKAGPKGDKGDQGEA. The region spanning 111–221 is the Fibrinogen C-terminal domain; sequence QQQEAGAKDC…DFNNSKTFAK (111 aa). Cys120 and Cys148 are oxidised to a cystine.

It belongs to the ficolin lectin family. Veficolin subfamily. Expressed by the mandibular venom duct.

It localises to the secreted. Its function is as follows. Initiates complement activation and/or interferes in platelet aggregation and/or blood coagulation. This Varanus komodoensis (Komodo dragon) protein is Veficolin-1.